A 500-amino-acid polypeptide reads, in one-letter code: Abscisic acid 8'-hydroxylase 3 (500 aa).

The helical transmembrane segment at 3-23 (ASFVIVIVISFFISLAFMCYV) threads the bilayer. Position 426 (cysteine 426) interacts with heme.

Belongs to the cytochrome P450 family. Heme serves as cofactor.

The protein localises to the membrane. The catalysed reaction is 2-cis-(+)-abscisate + reduced [NADPH--hemoprotein reductase] + O2 = (+)-8'-hydroxyabscisate + oxidized [NADPH--hemoprotein reductase] + H2O + H(+). It participates in plant hormone degradation; abscisic acid degradation. Its function is as follows. Involved in the oxidative degradation of abscisic acid. The protein is Abscisic acid 8'-hydroxylase 3 (CYP707A7) of Oryza sativa subsp. indica (Rice).